We begin with the raw amino-acid sequence, 188 residues long: MNIVLFGPPGCGKGTQSKRLVAERGWVQLSTGDMLRHARAAGTELGRRVAAIMDGGNLVSDAIVIELIEERLPEAKAAGGAIFDGFPRTVAQAQALDQLLLDRGTQVDSVIELKVNDEELVQRLVKRAEEEGRPDDTEDVIRKRLEVYYGQTAPLIPFFAQQGKVKAVDGMGSMDEVAAGIAAALEEK.

Residue glycine 10–threonine 15 participates in ATP binding. Positions serine 30 to valine 59 are NMP. Residues threonine 31, arginine 36, asparagine 57–valine 59, glycine 85–arginine 88, and glutamine 92 contribute to the AMP site. The tract at residues lysine 126–aspartate 136 is LID. Arginine 127 provides a ligand contact to ATP. AMP contacts are provided by arginine 133 and arginine 144. Glycine 172 is a binding site for ATP.

It belongs to the adenylate kinase family. As to quaternary structure, monomer.

It is found in the cytoplasm. The enzyme catalyses AMP + ATP = 2 ADP. It participates in purine metabolism; AMP biosynthesis via salvage pathway; AMP from ADP: step 1/1. Catalyzes the reversible transfer of the terminal phosphate group between ATP and AMP. Plays an important role in cellular energy homeostasis and in adenine nucleotide metabolism. This is Adenylate kinase from Maricaulis maris (strain MCS10) (Caulobacter maris).